Consider the following 229-residue polypeptide: Acetylcholine-binding protein (229 aa).

Positions 1–19 (MRRNIFCLACLWIVQACLS) are cleaved as a signal peptide. The N-linked (GlcNAc...) asparagine glycan is linked to N85. The region spanning 114 to 217 (PEVLTPQLAR…PEAYEDVEVS (104 aa)) is the Ig-like domain. Residues C142 and C155 are joined by a disulfide bond.

In terms of assembly, homopentamer. In terms of processing, N-glycosylated. Expressed by glial cells.

It localises to the synaptic cleft. Functionally, binds to acetylcholine. Modulates neuronal synaptic transmission. This chain is Acetylcholine-binding protein, found in Lymnaea stagnalis (Great pond snail).